Consider the following 130-residue polypeptide: Cytochrome b-c1 complex subunit 7 (130 aa).

It belongs to the UQCRB/QCR7 family. As to quaternary structure, component of the ubiquinol-cytochrome c oxidoreductase (cytochrome b-c1 complex, complex III, CIII), a multisubunit enzyme composed of 3 respiratory subunits cytochrome b, cytochrome c1 and Rieske protein, 2 core protein subunits, and additional low-molecular weight protein subunits. The complex exists as an obligatory dimer and forms supercomplexes (SCs) in the inner mitochondrial membrane with cytochrome c oxidase (complex IV, CIV).

Its subcellular location is the mitochondrion inner membrane. Its function is as follows. Component of the ubiquinol-cytochrome c oxidoreductase, a multisubunit transmembrane complex that is part of the mitochondrial electron transport chain which drives oxidative phosphorylation. The respiratory chain contains 3 multisubunit complexes succinate dehydrogenase (complex II, CII), ubiquinol-cytochrome c oxidoreductase (cytochrome b-c1 complex, complex III, CIII) and cytochrome c oxidase (complex IV, CIV), that cooperate to transfer electrons derived from NADH and succinate to molecular oxygen, creating an electrochemical gradient over the inner membrane that drives transmembrane transport and the ATP synthase. The cytochrome b-c1 complex catalyzes electron transfer from ubiquinol to cytochrome c, linking this redox reaction to translocation of protons across the mitochondrial inner membrane, with protons being carried across the membrane as hydrogens on the quinol. In the process called Q cycle, 2 protons are consumed from the matrix, 4 protons are released into the intermembrane space and 2 electrons are passed to cytochrome c. This chain is Cytochrome b-c1 complex subunit 7 (UBCRBP), found in Echinococcus multilocularis (Fox tapeworm).